We begin with the raw amino-acid sequence, 177 residues long: UBA-like domain-containing protein 1 (177 aa).

Residues 89-177 are disordered; that stretch reads ESFHSGGSGS…RAHPAMEAER (89 aa). The segment covering 112 to 138 has biased composition (low complexity); that stretch reads PHAATSSSAASSWPTAASPPGGPQHHQ. Pro residues predominate over residues 139–151; sequence PQPPLWTPTPPSP. The segment covering 167 to 177 has biased composition (basic and acidic residues); sequence PRAHPAMEAER.

It belongs to the UBALD family.

This chain is UBA-like domain-containing protein 1 (UBALD1), found in Homo sapiens (Human).